A 149-amino-acid chain; its full sequence is Large ribosomal subunit protein uL13 (149 aa).

The protein belongs to the universal ribosomal protein uL13 family. As to quaternary structure, part of the 50S ribosomal subunit.

In terms of biological role, this protein is one of the early assembly proteins of the 50S ribosomal subunit, although it is not seen to bind rRNA by itself. It is important during the early stages of 50S assembly. The sequence is that of Large ribosomal subunit protein uL13 from Saccharolobus solfataricus (strain ATCC 35092 / DSM 1617 / JCM 11322 / P2) (Sulfolobus solfataricus).